Here is a 129-residue protein sequence, read N- to C-terminus: Large ribosomal subunit protein bL12 (129 aa).

It belongs to the bacterial ribosomal protein bL12 family. In terms of assembly, homodimer. Part of the ribosomal stalk of the 50S ribosomal subunit. Forms a multimeric L10(L12)X complex, where L10 forms an elongated spine to which 2 to 4 L12 dimers bind in a sequential fashion. Binds GTP-bound translation factors.

Functionally, forms part of the ribosomal stalk which helps the ribosome interact with GTP-bound translation factors. Is thus essential for accurate translation. The polypeptide is Large ribosomal subunit protein bL12 (Treponema denticola (strain ATCC 35405 / DSM 14222 / CIP 103919 / JCM 8153 / KCTC 15104)).